A 213-amino-acid polypeptide reads, in one-letter code: Chloramphenicol acetyltransferase 2 (213 aa).

His189 serves as the catalytic Proton acceptor.

It belongs to the chloramphenicol acetyltransferase family. Homotrimer.

The catalysed reaction is chloramphenicol + acetyl-CoA = chloramphenicol 3-acetate + CoA. Functionally, this enzyme is an effector of chloramphenicol resistance in bacteria. The chain is Chloramphenicol acetyltransferase 2 (cmlA) from Escherichia coli.